Consider the following 406-residue polypeptide: Betaine--homocysteine S-methyltransferase 1 (406 aa).

Residues 11–314 (KGILERLNAG…YHIRAIAEEL (304 aa)) enclose the Hcy-binding domain. An N6-succinyllysine mark is found at Lys40, Lys93, and Lys98. A Zn(2+)-binding site is contributed by Cys217. Residues Lys232 and Lys241 each carry the N6-succinyllysine modification. 2 residues coordinate Zn(2+): Cys299 and Cys300. Ser330 is modified (phosphoserine). 2 positions are modified to N6-succinyllysine: Lys340 and Lys377.

In terms of assembly, homotetramer. Zn(2+) is required as a cofactor.

The protein localises to the cytoplasm. The protein resides in the cytosol. It is found in the nucleus. It catalyses the reaction L-homocysteine + glycine betaine = N,N-dimethylglycine + L-methionine. Its pathway is amine and polyamine degradation; betaine degradation; sarcosine from betaine: step 1/2. It functions in the pathway amino-acid biosynthesis; L-methionine biosynthesis via de novo pathway; L-methionine from L-homocysteine (BhmT route): step 1/1. Functionally, involved in the regulation of homocysteine metabolism. Converts betaine and homocysteine to dimethylglycine and methionine, respectively. This reaction is also required for the irreversible oxidation of choline. The protein is Betaine--homocysteine S-methyltransferase 1 (BHMT) of Pongo abelii (Sumatran orangutan).